Consider the following 338-residue polypeptide: MVARAQPDRKQLPLVLLRLLCLLPTGLPVRSVDFTRGTDNITVRQGDTAILRCFVEDRSSKVAWLNRSGIIFAGEDKWSLDPRVELEKRSPLEYSLRIQKVDVYDEGSYTCSVQTQHHPKTSQVYLIVQVPPKISNISSDITVNEGSNVTLVCMANGRPEPVITWRHLTPTGKEFEGEEEYLEILGITREQSGKYECKAANEVASADVKQVRVTVNYPPTITESKSNEAATGRQALLRCEASAVPTPDFEWYRDDTRINSANGLEIKSTGSQSLLMVANVTEEHYGNYTCVAANKLGVTNASLYLYRPGTGRVDNGSVSLAVPLWLLAASLLCLLSKC.

An N-terminal signal peptide occupies residues 1 to 28; sequence MVARAQPDRKQLPLVLLRLLCLLPTGLP. 3 Ig-like C2-type domains span residues 29–122, 132–214, and 219–306; these read VRSV…PKTS, PKIS…VRVT, and PTIT…LYLY. N-linked (GlcNAc...) asparagine glycosylation is found at asparagine 40, asparagine 66, asparagine 136, and asparagine 148. Cysteine 53 and cysteine 111 form a disulfide bridge. 2 cysteine pairs are disulfide-bonded: cysteine 153–cysteine 197 and cysteine 239–cysteine 290. N-linked (GlcNAc...) asparagine glycosylation is found at asparagine 279, asparagine 287, asparagine 300, and asparagine 315. The GPI-anchor amidated asparagine moiety is linked to residue asparagine 315. Residues 316-338 constitute a propeptide, removed in mature form; the sequence is GSVSLAVPLWLLAASLLCLLSKC.

This sequence belongs to the immunoglobulin superfamily. IgLON family.

It is found in the cell membrane. Its function is as follows. Mediates selective neuronal growth and axon targeting. Probably serves as a recognition molecule for the formation of limbic connections. The polypeptide is Limbic system-associated membrane protein (Gallus gallus (Chicken)).